A 1177-amino-acid polypeptide reads, in one-letter code: Lysylphosphatidylglycerol biosynthesis bifunctional protein LysX (1177 aa).

2 disordered regions span residues 1 to 40 and 61 to 85; these read MRRA…AKFV and VTLA…PANR. The interval 1–676 is phosphatidylglycerol lysyltransferase; sequence MRRAGRSRQF…LLHHDGSAPD (676 aa). The span at 8-21 shows a compositional bias: polar residues; sequence RQFSSVEEAFSTSA. Residues 65–82 show a composition bias toward low complexity; it reads SPGSRSGSGPRSGPRLGP. Helical transmembrane passes span 93–113, 135–155, 159–179, 189–209, 227–247, and 281–301; these read VPAA…LGSV, FPDT…ALTA, IAWL…VADI, IFGE…LVLA, AVLV…VELF, and VFLN…ATIV. A disordered region spans residues 673–693; the sequence is SAPDVSGLRPERTDAEEARSR. Residues 677 to 1177 form a lysine--tRNA ligase region; it reads VSGLRPERTD…TLPFPLAKPH (501 aa). Basic and acidic residues predominate over residues 681–693; sequence RPERTDAEEARSR. Mg(2+) contacts are provided by aspartate 1089 and glutamate 1096.

It in the N-terminal section; belongs to the LPG synthetase family. In the C-terminal section; belongs to the class-II aminoacyl-tRNA synthetase family. Mg(2+) is required as a cofactor.

It localises to the cell membrane. It catalyses the reaction tRNA(Lys) + L-lysine + ATP = L-lysyl-tRNA(Lys) + AMP + diphosphate. The catalysed reaction is L-lysyl-tRNA(Lys) + a 1,2-diacyl-sn-glycero-3-phospho-(1'-sn-glycerol) = a 1,2-diacyl-sn-glycero-3-phospho-1'-(3'-O-L-lysyl)-sn-glycerol + tRNA(Lys). Functionally, catalyzes the production of L-lysyl-tRNA(Lys)transfer and the transfer of a lysyl group from L-lysyl-tRNA(Lys) to membrane-bound phosphatidylglycerol (PG), which produces lysylphosphatidylglycerol (LPG), one of the components of the bacterial membrane with a positive net charge. LPG synthesis contributes to the resistance to cationic antimicrobial peptides (CAMPs) and likely protects M.tuberculosis against the CAMPs produced by competiting microorganisms (bacteriocins). In fact, the modification of anionic phosphatidylglycerol with positively charged L-lysine results in repulsion of the peptides. This chain is Lysylphosphatidylglycerol biosynthesis bifunctional protein LysX (lysX), found in Mycobacterium avium (strain 104).